The sequence spans 407 residues: Accessory Sec system protein translocase subunit SecY2 (407 aa).

Helical transmembrane passes span 22–42, 68–88, 108–128, 136–156, 169–189, 191–211, 245–265, 280–300, 343–363, and 366–386; these read IAFT…TIVD, LNVF…ISLI, EKFL…NQFV, FTEL…MWLA, PIVL…IVSI, ILML…LLLT, ISIM…NLIF, FGHY…GYLL, WFGT…SLLV, and LSEY…AMNI.

Belongs to the SecY/SEC61-alpha family. SecY2 subfamily. Component of the accessory SecA2/SecY2 protein translocase complex required to export cell wall proteins. May form heterotrimers with SecE and SecG subunits.

It localises to the cell membrane. Its function is as follows. Part of the accessory SecA2/SecY2 system specifically required for export of possible cell wall proteins. The central subunit of a protein translocation channel. The sequence is that of Accessory Sec system protein translocase subunit SecY2 from Staphylococcus pseudintermedius (strain ED99).